Here is a 217-residue protein sequence, read N- to C-terminus: MSAAGAIAAASVGRLRTGVRRPFSEYGRGLIIRCHSSGMTLDNINRAAVDRIIRVDHAGEYGANRIYAGQMAVLGRTSVGPVIQKMWDQEKNHLKKFNELMIAFRVRPTVLMPLWNVAGFALGAGTALLGKEGAMACTVAVEESIANHYNNQIRMLMEEDPEKYEELLQVIKQFRDEELEHHDTGLDHDAELAPAYALLKRIIQAGCSAAIYLSERF.

Residues 1-23 constitute a mitochondrion transit peptide; sequence MSAAGAIAAASVGRLRTGVRRPF. Tandem repeats lie at residues 48-129 and 130-217. Residues 48–217 form a 2 X approximate tandem repeats region; the sequence is AVDRIIRVDH…SAAIYLSERF (170 aa). R51 serves as a coordination point for NADH. Residues E60, E90, H93, E142, E178, and H181 each contribute to the Fe cation site. Residues Y212 and R216 each contribute to the NADH site.

It belongs to the COQ7 family. In terms of assembly, component of a multi-subunit COQ enzyme complex. Interacts with COQ8B and COQ6. Interacts with COQ9. Fe cation is required as a cofactor. In terms of tissue distribution, highly expressed in tissues with high energy demand such as heart, muscle, liver, and kidney.

The protein localises to the mitochondrion inner membrane. It catalyses the reaction a 5-methoxy-2-methyl-3-(all-trans-polyprenyl)benzoquinone + NADH + O2 = a 3-demethylubiquinone + NAD(+) + H2O. Its pathway is cofactor biosynthesis; ubiquinone biosynthesis. In terms of biological role, catalyzes the hydroxylation of the 5-methoxy-2-methyl-3-(all-trans-polyprenyl)benzoquinone at the C6 position and participates in the biosynthesis of ubiquinone. Catalyzes the reaction through a substrate-mediated reduction pathway, whereby NADH shuttles electrons to 5-methoxy-2-methyl-3-(all-trans-decaprenyl)benzoquinone, which then transfers the electrons to the two Fe(3+) centers. The binding of 5-methoxy-2-methyl-3-(all-trans-polyprenyl)benzoquinone (DMQn) mediates reduction of the diiron center by nicotinamide adenine dinucleotide (NADH) and initiates oxygen activation for subsequent DMQ hydroxylation. The physiological substrates are 5-methoxy-2-methyl-3-(all-trans-nonaprenyl)benzoquinone (DMQ(9)) and 5-methoxy-2-methyl-3-(all-trans-decaprenyl)benzoquinone (DMQ(10)), however in vitro the enzyme does not have any specificity concerning the length of the polyprenyl tail, and accepts tails of various lengths with similar efficiency. Also has a structural role in the COQ enzyme complex, stabilizing other COQ polypeptides. Involved in lifespan determination in a ubiquinone-independent manner. Plays a role in modulating mitochondrial stress responses, acting in the nucleus, perhaps via regulating gene expression, independent of its characterized mitochondrial function in ubiquinone biosynthesis. This is NADPH-dependent 3-demethoxyubiquinone 3-hydroxylase, mitochondrial from Mus musculus (Mouse).